The chain runs to 171 residues: CDP-archaeol synthase (171 aa).

5 helical membrane-spanning segments follow: residues Met-7–Leu-27, Phe-55–Ala-75, Val-84–Ile-104, Pro-115–Val-135, and Gly-141–Ala-161.

It belongs to the CDP-archaeol synthase family. The cofactor is Mg(2+).

It localises to the cell membrane. It catalyses the reaction 2,3-bis-O-(geranylgeranyl)-sn-glycerol 1-phosphate + CTP + H(+) = CDP-2,3-bis-O-(geranylgeranyl)-sn-glycerol + diphosphate. The protein operates within membrane lipid metabolism; glycerophospholipid metabolism. Catalyzes the formation of CDP-2,3-bis-(O-geranylgeranyl)-sn-glycerol (CDP-archaeol) from 2,3-bis-(O-geranylgeranyl)-sn-glycerol 1-phosphate (DGGGP) and CTP. This reaction is the third ether-bond-formation step in the biosynthesis of archaeal membrane lipids. In Thermococcus gammatolerans (strain DSM 15229 / JCM 11827 / EJ3), this protein is CDP-archaeol synthase.